Reading from the N-terminus, the 245-residue chain is MGVPFDYAPERPEHIDAILNGLDRYNPETTNIFQEYVTLQCEEKTYDCYANLALLKLYQFNPHLTKDETITNILVKSLTVFPSPDFSLALHLLPPHILTPISSSSALPAAGDAPLSEAVQKLAVLNTLLSSANYSQFWSTLDSDDLYADLIADVSGFEELIRIRIASTISQSVREIPSSELENWLGMNGEAFEKFIKEVCGWTIENGSVIVPLNKENEAKGTVVRENVKMEQFSRVIRRAYEQPA.

A PCI domain is found at 46–227; the sequence is YDCYANLALL…EAKGTVVREN (182 aa).

This sequence belongs to the eIF-3 subunit K family. In terms of assembly, component of the eukaryotic translation initiation factor 3 (eIF-3) complex.

It localises to the cytoplasm. Its function is as follows. Component of the eukaryotic translation initiation factor 3 (eIF-3) complex, which is involved in protein synthesis of a specialized repertoire of mRNAs and, together with other initiation factors, stimulates binding of mRNA and methionyl-tRNAi to the 40S ribosome. The eIF-3 complex specifically targets and initiates translation of a subset of mRNAs involved in cell proliferation. In Sclerotinia sclerotiorum (strain ATCC 18683 / 1980 / Ss-1) (White mold), this protein is Eukaryotic translation initiation factor 3 subunit K.